A 297-amino-acid polypeptide reads, in one-letter code: GTP cyclohydrolase FolE2 (297 aa).

The protein belongs to the GTP cyclohydrolase IV family.

It carries out the reaction GTP + H2O = 7,8-dihydroneopterin 3'-triphosphate + formate + H(+). Its pathway is cofactor biosynthesis; 7,8-dihydroneopterin triphosphate biosynthesis; 7,8-dihydroneopterin triphosphate from GTP: step 1/1. Its function is as follows. Converts GTP to 7,8-dihydroneopterin triphosphate. The polypeptide is GTP cyclohydrolase FolE2 (Pseudomonas fluorescens (strain ATCC BAA-477 / NRRL B-23932 / Pf-5)).